The sequence spans 236 residues: Small ribosomal subunit protein uS2c (236 aa).

It belongs to the universal ribosomal protein uS2 family.

It localises to the plastid. The protein resides in the chloroplast. The chain is Small ribosomal subunit protein uS2c (rps2) from Lepidium virginicum (Virginia pepperweed).